A 250-amino-acid chain; its full sequence is Eukaryotic translation initiation factor 3 subunit K (250 aa).

Residues 46–229 (FDCYANLALL…KENEARSEVK (184 aa)) form the PCI domain.

It belongs to the eIF-3 subunit K family. In terms of assembly, component of the eukaryotic translation initiation factor 3 (eIF-3) complex.

The protein localises to the cytoplasm. In terms of biological role, component of the eukaryotic translation initiation factor 3 (eIF-3) complex, which is involved in protein synthesis of a specialized repertoire of mRNAs and, together with other initiation factors, stimulates binding of mRNA and methionyl-tRNAi to the 40S ribosome. The eIF-3 complex specifically targets and initiates translation of a subset of mRNAs involved in cell proliferation. The polypeptide is Eukaryotic translation initiation factor 3 subunit K (Emericella nidulans (strain FGSC A4 / ATCC 38163 / CBS 112.46 / NRRL 194 / M139) (Aspergillus nidulans)).